Consider the following 417-residue polypeptide: Origin of replication complex subunit 4 (417 aa).

59-66 (GPRGSGKA) contributes to the ATP binding site.

Belongs to the ORC4 family. As to quaternary structure, component of the origin recognition complex (ORC) composed of at least ORC1 (ORC1A or ORC1B), ORC2, ORC3, ORC4, ORC5 and ORC6. ORC is regulated in a cell-cycle and development dependent manner. It is sequentially assembled at the exit from anaphase of mitosis and disassembled as cells enter S phase. Interacts directly with ORC1A, ORC2, ORC3, ORC5 and ORC6. In terms of tissue distribution, follow a cell-cycle regulation with a peak at the G1/S-phase. Isoform AtORC4a is expressed at low levels ubiquitously. Isoform AtORC4b is mostly expressed in siliques, flowers and flower buds, and, to a lower exent, in roots, leaves and stems.

Its subcellular location is the nucleus. Its function is as follows. Component of the origin recognition complex (ORC) that binds origins of replication. DNA-binding is ATP-dependent. The specific DNA sequences that define origins of replication have not been identified yet. ORC is required to assemble the pre-replication complex necessary to initiate DNA replication. This is Origin of replication complex subunit 4 from Arabidopsis thaliana (Mouse-ear cress).